The primary structure comprises 597 residues: MSAILSADDLNDFISPGVACIKPVESLPQKESQSENPYEVTKEDKVQPENLPPAQISLTDCLACSGCVTSAEAVLISLQSHTEVLNTLDLYPELPLDFASDQRGTQNVGSADSDSRIFVASVSPQVRASLAATYGITEREAKYMIDQFLMGPHGLRAGGKHGNGFTWVVDTNVMREAVLALTADEVTNSLLSTGSGSLPKSPILSSACPGWICYAEKTHPFILPHLSRLKSPQALSGTFLKSVLSKALGVSPSQIWHLAIMPCFDKKLEASREELTDIAWASTSAESQTTPVRDVDCVITTRELLTLASARGLSLPNLPLKALPASCSTPFPDQALDSFLFSKSSSDQTVESGTSGGYLHHVLKIFQARNPGSKIVTQRGRNADVVEYVLMSSGDEPLLKAARYYGFRNIQNLVRKLKPARVSRLPGAKPQAVTSSANRRQPMSRNAAPAGTGADYAYVEVMACPGGCTNGGGQIRIEDAREAVPNALKETSTETPVAASKPTPHEQRARLARVDEAYYSADSDSEGSVTTEPVSVLSRDTKIHEFLKYWSEKIDIPLSQLAYTSYREVESDVGKTQNAPNETARVVELAGKIGGGW.

Cys-20 provides a ligand contact to [4Fe-4S] cluster. Residues 25–46 (ESLPQKESQSENPYEVTKEDKV) form a disordered region. Positions 61, 64, 67, 208, and 263 each coordinate [4Fe-4S] cluster. Residues 422–448 (VSRLPGAKPQAVTSSANRRQPMSRNAA) form a disordered region. Polar residues predominate over residues 432 to 444 (AVTSSANRRQPMS). The [4Fe-4S] cluster site is built by Cys-464 and Cys-468.

This sequence belongs to the NARF family.

Component of the cytosolic Fe/S protein assembly machinery. Required for maturation of extramitochondrial Fe/S proteins. May play a role in the transfer of pre-assembled Fe/S clusters to target apoproteins. This chain is Cytosolic Fe-S cluster assembly factor NAR1 (NAR1), found in Neosartorya fischeri (strain ATCC 1020 / DSM 3700 / CBS 544.65 / FGSC A1164 / JCM 1740 / NRRL 181 / WB 181) (Aspergillus fischerianus).